A 564-amino-acid polypeptide reads, in one-letter code: Pyranose 2-oxidase (564 aa).

A propeptide spanning residues 1–25 (MPIRLSKEKINDLLQRSQGDLTSSQ) is cleaved from the precursor. Tele-8alpha-FAD histidine is present on histidine 158. Glutamine 392 and histidine 394 together coordinate substrate. Residue histidine 498 is the Proton acceptor of the active site. Asparagine 541 is an active-site residue.

This sequence belongs to the GMC oxidoreductase family. In terms of assembly, homotetramer. The cofactor is FAD.

It carries out the reaction D-glucose + O2 = 2-dehydro-D-glucose + H2O2. In terms of biological role, catalyzes the oxidation of various aldopyranoses and disaccharides on carbon-2 to the corresponding 2-keto sugars concomitant with the reduction of O(2) to H(2)O(2). The preferred substrate is D-glucose which is converted to 2-dehydro-D-glucose. Acts also on D-xylose, L-sorbose, D-galactose and 1,5-anhydroglucitol, a diagnostic marker of diabetes mellitus. This is Pyranose 2-oxidase (p2ox) from Tricholoma matsutake (Matsutake mushroom).